Consider the following 87-residue polypeptide: Developmentally-regulated ectodermal protein (87 aa).

Residues 1–16 (MKRLLVLTLVSAILMA) form the signal peptide.

The chain is Developmentally-regulated ectodermal protein from Tripneustes gratilla (Hawaian sea urchin).